Reading from the N-terminus, the 387-residue chain is Cysteine desulfurase (387 aa).

Pyridoxal 5'-phosphate contacts are provided by residues 72 to 73 (GT), N152, Q180, and 200 to 202 (SAH). Position 203 is an N6-(pyridoxal phosphate)lysine (K203). T238 contributes to the pyridoxal 5'-phosphate binding site. C326 (cysteine persulfide intermediate) is an active-site residue. C326 serves as a coordination point for [2Fe-2S] cluster.

It belongs to the class-V pyridoxal-phosphate-dependent aminotransferase family. NifS/IscS subfamily. As to quaternary structure, homodimer. Requires pyridoxal 5'-phosphate as cofactor.

It carries out the reaction (sulfur carrier)-H + L-cysteine = (sulfur carrier)-SH + L-alanine. Functionally, catalyzes the removal of elemental sulfur atoms from cysteine to produce alanine. Seems to participate in the biosynthesis of the nitrogenase metalloclusters by providing the inorganic sulfur required for the Fe-S core formation. The sequence is that of Cysteine desulfurase from Sinorhizobium fredii (strain NBRC 101917 / NGR234).